We begin with the raw amino-acid sequence, 452 residues long: NAD kinase 2, mitochondrial (452 aa).

The transit peptide at 1-50 directs the protein to the mitochondrion; sequence MTCYRGFLLGSCRRVAGGRAALRGSGSGADGRRHLGHGQPRELAGGGSPA. The segment at 23-52 is disordered; the sequence is RGSGSGADGRRHLGHGQPRELAGGGSPADG. Lys-64 is subject to N6-acetyllysine; alternate. At Lys-64 the chain carries N6-succinyllysine; alternate. At Ser-176 the chain carries Phosphoserine. N6-succinyllysine is present on Lys-312. Lys-327 carries the post-translational modification N6-acetyllysine; alternate. Lys-327 is subject to N6-succinyllysine; alternate. Residue Ser-377 is modified to Phosphoserine. Lys-407 carries the N6-acetyllysine modification.

Belongs to the NAD kinase family. Homodimer.

Its subcellular location is the mitochondrion. The catalysed reaction is NAD(+) + ATP = ADP + NADP(+) + H(+). Inhibited by NADH, NADPH and NADP(+). Functionally, mitochondrial NAD(+) kinase that phosphorylates NAD(+) to yield NADP(+). Can use both ATP or inorganic polyphosphate as the phosphoryl donor. The polypeptide is NAD kinase 2, mitochondrial (Nadk2) (Mus musculus (Mouse)).